The primary structure comprises 185 residues: HTH-type transcriptional regulator SAB2452 (185 aa).

The 61-residue stretch at Ile6–Phe66 folds into the HTH tetR-type domain. The segment at residues Ser29–Phe48 is a DNA-binding region (H-T-H motif).

This is HTH-type transcriptional regulator SAB2452 from Staphylococcus aureus (strain bovine RF122 / ET3-1).